A 311-amino-acid chain; its full sequence is Progestin and adipoQ receptor family member 3 (311 aa).

A required for interaction with SREBF2 region spans residues 1–20 (MHQKLLKSAHYIELGSYQYW). At 1 to 70 (MHQKLLKSAH…KSLFILSNET (70 aa)) the chain is on the cytoplasmic side. A required for interaction with SCAP region spans residues 41–60 (KDNPYITDGYRAYLPSRLCI). The interval 61–71 (KSLFILSNETV) is golgi targeting. A helical transmembrane segment spans residues 71 to 91 (VNIWSHLLGFFLFFTLGIYDM). The Lumenal portion of the chain corresponds to 92–104 (TSVLPSASASRED). Residues 105 to 125 (FVICSICLFCFQVCMLCSVGY) traverse the membrane as a helical segment. Topologically, residues 126 to 145 (HLFSCHRSEKTCRRWMALDY) are cytoplasmic. A helical membrane pass occupies residues 146 to 166 (AGISIGILGCYVSGVFYAFYC). Topologically, residues 167-172 (NNYWRQ) are lumenal. The chain crosses the membrane as a helical span at residues 173-193 (VYLITVLAMILAVFFAQIHPS). At 194–203 (YLTQQWQRLR) the chain is on the cytoplasmic side. Residues 204-224 (PIIFCSVSGYGVIPTLHWVWL) traverse the membrane as a helical segment. Residues 225–235 (NGGVSAPIVQD) lie on the Lumenal side of the membrane. A helical membrane pass occupies residues 236-256 (FAPRVIVMYVIALLAFLFYIS). Topologically, residues 257–275 (KVPERYFPGQLNYLGSSHQ) are cytoplasmic. The chain crosses the membrane as a helical span at residues 276-296 (IWHVLAVVMLYWWHQSTVYVM). The Lumenal portion of the chain corresponds to 297–311 (QYRHSKPCPDYVSHL). Residues 299 to 303 (RHSKP) form a golgi targeting region.

It belongs to the ADIPOR family. As to quaternary structure, interacts with SCAP and SREBF2; the interactions are direct, increase in low cholesterol conditions and tether SCAP:SREBP complex to the Golgi apparatus. Interaction with SCAP is mutually exclusive with INSIG1. In hepatocytes, interacts with PPARA and HUWE1; the interactions promote PPARA poylubiquitination and HUWE1-mediated degradation. In macrophages, interacts with PPARG and STUB1; the interactions promote PPARG poylubiquitination and STUB1-mediated degradation.

It is found in the golgi apparatus membrane. Golgi-anchored protein which modulates its interactors acitivies by tethering them to the Golgi apparatus. Functions as a spatial regulator of RAF1 kinase by sequestrating it to the Golgi apparatus. Acts as a positive regulator of cholesterol biosynthesis by mediating the anchoring of the SCAP:SREBP complex in the Golgi apparatus, thereby promoting SCAP:SREBF2 complex formation, potentiating SREBF2 and SREBF1 processing and enhancing lipid synthesis. Also regulates PPARA and PPARG functions by mediating their interaction with E3 ubiquitin ligases, such as STUB1 or HUWE1, leading to their polyubiquitination and proteasome-mediated degradation. The polypeptide is Progestin and adipoQ receptor family member 3 (Mus musculus (Mouse)).